A 289-amino-acid polypeptide reads, in one-letter code: dTDP-rhamnosyl transferase RfbG (289 aa).

The protein belongs to the glycosyltransferase 2 family.

It participates in bacterial outer membrane biogenesis; lipopolysaccharide biosynthesis. This Shigella flexneri protein is dTDP-rhamnosyl transferase RfbG (rfbG).